We begin with the raw amino-acid sequence, 708 residues long: Wall-associated receptor kinase-like 14 (708 aa).

The first 42 residues, 1-42 (MLRSIFDFNQRSTKMVMISHKLDLILVFIIVIGGSIFRRVSA), serve as a signal peptide directing secretion. Asparagine 43, asparagine 88, asparagine 101, asparagine 131, asparagine 158, asparagine 167, and asparagine 184 each carry an N-linked (GlcNAc...) asparagine glycan. Over 43 to 285 (NFTVPCNGRC…WRHCRSNLIT (243 aa)) the chain is Extracellular. The helical transmembrane segment at 286–306 (IVGGTVGGAFLLAALAFFFFC) threads the bilayer. The Cytoplasmic segment spans residues 307-708 (KRRRSTPLRS…TNTLLGNIPR (402 aa)). The Protein kinase domain maps to 348–629 (FSEKQKLGIG…LEQIRLSGWI (282 aa)). ATP is bound by residues 354–362 (LGIGAYGTV) and lysine 376. The active-site Proton acceptor is the aspartate 472. Disordered stretches follow at residues 636–659 (SPAG…SIGS) and 686–708 (VQDP…NIPR). Residues 643-652 (SSDRGSERSV) show a composition bias toward basic and acidic residues. The segment covering 692–708 (SAQSSPSTNTLLGNIPR) has biased composition (polar residues).

Belongs to the protein kinase superfamily. Ser/Thr protein kinase family.

It localises to the membrane. The catalysed reaction is L-seryl-[protein] + ATP = O-phospho-L-seryl-[protein] + ADP + H(+). It carries out the reaction L-threonyl-[protein] + ATP = O-phospho-L-threonyl-[protein] + ADP + H(+). Functionally, serine/threonine-protein kinase that may function as a signaling receptor of extracellular matrix component. This is Wall-associated receptor kinase-like 14 (WAKL14) from Arabidopsis thaliana (Mouse-ear cress).